Reading from the N-terminus, the 77-residue chain is DNA-directed RNA polymerase subunit Rpo10 (77 aa).

The Zn(2+) site is built by Cys7, Cys10, Cys44, and Cys45.

This sequence belongs to the archaeal Rpo10/eukaryotic RPB10 RNA polymerase subunit family. Part of the RNA polymerase complex. The cofactor is Zn(2+).

The protein localises to the cytoplasm. It catalyses the reaction RNA(n) + a ribonucleoside 5'-triphosphate = RNA(n+1) + diphosphate. Functionally, DNA-dependent RNA polymerase (RNAP) catalyzes the transcription of DNA into RNA using the four ribonucleoside triphosphates as substrates. This Aeropyrum pernix (strain ATCC 700893 / DSM 11879 / JCM 9820 / NBRC 100138 / K1) protein is DNA-directed RNA polymerase subunit Rpo10.